Reading from the N-terminus, the 59-residue chain is Anti-inflammatory peptide amregulin (59 aa).

A signal peptide spans 1-19; that stretch reads MKLHMLNMLNCLLLTVCDG.

In terms of tissue distribution, salivary glands.

The protein localises to the secreted. In terms of biological role, anti-inflammatory peptide that may facilitate successful blood feeding of ticks and may lead to immunotolerance in its host. Inhibits the secretion of inflammatory factors in rat splenocytes, such as tumor necrosis factor-alpha (TNF), interleukin-1, interleukin-8 (CXCL8) and interferon-gamma (IFNG). In addition, shows strong free radical scavenging and antioxidant activities in vitro. In vivo, inhibits adjuvant-induced paw inflammation in mouse models. In Amblyomma variegatum (Tropical bont tick), this protein is Anti-inflammatory peptide amregulin.